The primary structure comprises 566 residues: MPRGFLVKRTKRTGGLYRVRLAERVFPLLGPQGAPPFLEEAPSASLPGAERATPPTREEPGKGLTAEAAREQSGSPCRAAGVSPGTGGREGAEWRAGGREGPGPSPSPSPSPAKPAGAELRRAFLERCLSSPVSAESFPGGAAAVAAFSCSVAPAAAPTPGEQFLLPLRAPFPEPALQPDPAPLSAALQSLKRAAGGERRGKAPTDCASGPAAAGIKKPKAMRKLSFADEVTTSPVLGLKIKEEEPGAPSRGLGGSRTPLGEFICQLCKEQYADPFALAQHRCSRIVRVEYRCPECDKVFSCPANLASHRRWHKPRPAAANAATVSSADGKPPSSSSSSSRDSGAIASFLAEGKENSRIERTADQHPQARDSSGADQHPDSAPRQGLQVLTHPEPPLPQGPYTEGVLGRRVPVPGSTSGGRGSEIFVCPYCHKKFRRQAYLRKHLSTHEAGSARALAPGFGSERGAPLAFACPLCGAHFPTADIREKHRLWHAVREELLLPALAGAPPETSGPSGPSDGSAQQIFSCKHCPSTFFSSPGLTRHINKCHPSESRQVLLLQMPLRPGC.

The SNAG domain stretch occupies residues 1-20 (MPRGFLVKRTKRTGGLYRVR). The interval 32–117 (QGAPPFLEEA…PSPSPAKPAG (86 aa)) is disordered. A compositionally biased stretch (pro residues) spans 103–113 (GPSPSPSPSPA). The C2H2-type 1; atypical zinc-finger motif lies at 263 to 283 (FICQLCKEQYADPFALAQHRC). Residues 291–313 (YRCPECDKVFSCPANLASHRRWH) form a C2H2-type 2 zinc finger. The interval 310 to 418 (RRWHKPRPAA…RRVPVPGSTS (109 aa)) is disordered. Residues 318 to 348 (AAANAATVSSADGKPPSSSSSSSRDSGAIAS) are compositionally biased toward low complexity. Basic and acidic residues predominate over residues 352-369 (EGKENSRIERTADQHPQA). C2H2-type zinc fingers lie at residues 426–448 (FVCP…LSTH), 470–492 (FACP…RLWH), and 525–548 (FSCK…NKCH).

Expressed in heart, liver, skeletal muscle, kidney and pancreas, and, to a lesser extent, in brain, lung and spleen. In the pancreas, expressed in islet cells, including insulin- and glucagon-producing alpha- and beta-cells, but not in acinar cells (at protein level). Detected in adrenal glands, particularly in the deeper layer of the cortex (at protein level).

It localises to the cytoplasm. The protein localises to the nucleus. May function as a growth suppressor or tumor suppressor in liver cells and in certain neurons. In Homo sapiens (Human), this protein is Insulinoma-associated protein 2 (INSM2).